The primary structure comprises 235 residues: ATP-dependent Clp protease proteolytic subunit (235 aa).

The active-site Nucleophile is the S123. H148 is a catalytic residue.

It belongs to the peptidase S14 family. As to quaternary structure, fourteen ClpP subunits assemble into 2 heptameric rings which stack back to back to give a disk-like structure with a central cavity, resembling the structure of eukaryotic proteasomes.

It localises to the cytoplasm. It carries out the reaction Hydrolysis of proteins to small peptides in the presence of ATP and magnesium. alpha-casein is the usual test substrate. In the absence of ATP, only oligopeptides shorter than five residues are hydrolyzed (such as succinyl-Leu-Tyr-|-NHMec, and Leu-Tyr-Leu-|-Tyr-Trp, in which cleavage of the -Tyr-|-Leu- and -Tyr-|-Trp bonds also occurs).. Its function is as follows. Cleaves peptides in various proteins in a process that requires ATP hydrolysis. Has a chymotrypsin-like activity. Plays a major role in the degradation of misfolded proteins. The protein is ATP-dependent Clp protease proteolytic subunit of Novosphingobium aromaticivorans (strain ATCC 700278 / DSM 12444 / CCUG 56034 / CIP 105152 / NBRC 16084 / F199).